Here is a 275-residue protein sequence, read N- to C-terminus: MNQDKRAFMFISPHFDDVILSCASTLMELMNQGHTCKVLTVFGGCPSVRFQPGEIARQYAAEDLGLFEDEIEGDHLSILVARRLQEDQQAFRHLPGVQVEVLSFPDAIYRENKGQPYYRTEADLFGIPDKQDEDIFLPKIETYLQSCDLARKYTWVFPAISKHVDHRLLTKAGLRLMSQGYPVLFYSEFPYWQQHNEFLQDGWRQLELRNSVYTPVKRAAVLEYKTQLLGLFGEEAETKINNGGVLSEAELFWIQETDTQAWRVFRSLSPEPLQT.

The Zn(2+) site is built by H14, D17, and H166.

The protein belongs to the PIGL family. Zn(2+) serves as cofactor.

It catalyses the reaction 2'-N-acetylparomamine + H2O = paromamine + acetate. Its pathway is antibiotic biosynthesis; butirosin biosynthesis. In terms of biological role, deacetylase involved in the biosynthesis of butirosin by mediating deacetylation of 2'-N-acetylparomamine. This is 2'-N-acetylparomamine deacetylase (btrD) from Niallia circulans (Bacillus circulans).